The primary structure comprises 434 residues: Guanosine-inosine kinase (434 aa).

Residues 40–45 (DQTLVD), 93–97 (GTIGN), and Arg198 each bind GMP. ATP contacts are provided by residues 284-289 (TAGPIG), Gly357, and Asn402.

Belongs to the carbohydrate kinase PfkB family. Requires Mg(2+) as cofactor.

It carries out the reaction guanosine + ATP = GMP + ADP + H(+). The catalysed reaction is inosine + ATP = IMP + ADP + H(+). Its pathway is purine metabolism; IMP biosynthesis via salvage pathway; IMP from inosine: step 1/1. It participates in purine metabolism; GMP biosynthesis via salvage pathway. Its function is as follows. Catalyzes the phosphorylation of guanosine and inosine to GMP and IMP, respectively. This chain is Guanosine-inosine kinase, found in Escherichia coli O157:H7.